Here is a 325-residue protein sequence, read N- to C-terminus: Aldo-keto reductase family 1 member A1 (325 aa).

An N-acetylalanine modification is found at A2. S4 carries the post-translational modification Phosphoserine. NADP(+)-binding positions include 11–20, T21, W22, and D45; that span reads GQKMPLIGLG. The Proton donor role is filled by Y50. The residue at position 127 (K127) is an N6-acetyllysine; alternate. K127 bears the N6-succinyllysine; alternate mark. An N6-succinyllysine modification is found at K145. Positions 162, 163, 211, 213, 215, 216, 263, 264, 265, 266, 269, 272, and 273 each coordinate NADP(+). The residue at position 211 (S211) is a Phosphoserine.

The protein belongs to the aldo/keto reductase family. In terms of assembly, monomer.

It localises to the cytoplasm. It is found in the cytosol. The protein resides in the apical cell membrane. It catalyses the reaction a primary alcohol + NADP(+) = an aldehyde + NADPH + H(+). The catalysed reaction is glycerol + NADP(+) = D-glyceraldehyde + NADPH + H(+). The enzyme catalyses glycerol + NADP(+) = L-glyceraldehyde + NADPH + H(+). It carries out the reaction L-gulonate + NADP(+) = aldehydo-D-glucuronate + NADPH + H(+). It catalyses the reaction L-gulono-1,4-lactone + NADP(+) = D-glucurono-3,6-lactone + NADPH + H(+). The catalysed reaction is allyl alcohol + NADP(+) = acrolein + NADPH + H(+). The enzyme catalyses hydroxyacetone + NADP(+) = methylglyoxal + NADPH + H(+). It carries out the reaction 3-deoxyfructose + NADP(+) = 3-deoxyglucosone + NADPH + H(+). It catalyses the reaction (R)-mevalonate + NADP(+) = (R)-mevaldate + NADPH + H(+). The catalysed reaction is pyridine 3-methanol + NADP(+) = pyridine-3-carbaldehyde + NADPH + H(+). The enzyme catalyses S-nitroso-CoA + NADPH + H(+) = sulfinamide-CoA + NADP(+). It carries out the reaction S-nitrosoglutathione + NADPH + H(+) = S-(hydroxysulfenamide)glutathione + NADP(+). Its function is as follows. Catalyzes the NADPH-dependent reduction of a wide variety of carbonyl-containing compounds to their corresponding alcohols. Displays enzymatic activity towards endogenous metabolites such as aromatic and aliphatic aldehydes, ketones, monosaccharides and bile acids, with a preference for negatively charged substrates, such as glucuronate and succinic semialdehyde. Plays an important role in ascorbic acid biosynthesis by catalyzing the reduction of D-glucuronic acid and D-glucurono-gamma-lactone. Functions as a detoxifiying enzyme by reducing a range of toxic aldehydes. Reduces methylglyoxal and 3-deoxyglucosone, which are present at elevated levels under hyperglycemic conditions and are cytotoxic. Involved also in the detoxification of lipid-derived aldehydes like acrolein. Plays a role in the activation of procarcinogens, such as polycyclic aromatic hydrocarbon trans-dihydrodiols, and in the metabolism of various xenobiotics and drugs. Also acts as an inhibitor of protein S-nitrosylation by mediating degradation of S-nitroso-coenzyme A (S-nitroso-CoA), a cofactor required to S-nitrosylate proteins. S-nitroso-CoA reductase activity is involved in reprogramming intermediary metabolism in renal proximal tubules, notably by inhibiting protein S-nitrosylation of isoform 2 of PKM (PKM2). Also acts as a S-nitroso-glutathione reductase by catalyzing the NADPH-dependent reduction of S-nitrosoglutathione. Displays no reductase activity towards retinoids. This Sus scrofa (Pig) protein is Aldo-keto reductase family 1 member A1 (AKR1A1).